The following is a 426-amino-acid chain: Serine--tRNA ligase (426 aa).

233–235 provides a ligand contact to L-serine; that stretch reads TAE. An ATP-binding site is contributed by 264-266; the sequence is RSE. Glutamate 287 lines the L-serine pocket. 351–354 contacts ATP; it reads EISS. Serine 387 lines the L-serine pocket.

This sequence belongs to the class-II aminoacyl-tRNA synthetase family. Type-1 seryl-tRNA synthetase subfamily. As to quaternary structure, homodimer. The tRNA molecule binds across the dimer.

It is found in the cytoplasm. The enzyme catalyses tRNA(Ser) + L-serine + ATP = L-seryl-tRNA(Ser) + AMP + diphosphate + H(+). It carries out the reaction tRNA(Sec) + L-serine + ATP = L-seryl-tRNA(Sec) + AMP + diphosphate + H(+). It participates in aminoacyl-tRNA biosynthesis; selenocysteinyl-tRNA(Sec) biosynthesis; L-seryl-tRNA(Sec) from L-serine and tRNA(Sec): step 1/1. Its function is as follows. Catalyzes the attachment of serine to tRNA(Ser). Is also able to aminoacylate tRNA(Sec) with serine, to form the misacylated tRNA L-seryl-tRNA(Sec), which will be further converted into selenocysteinyl-tRNA(Sec). This Azotobacter vinelandii (strain DJ / ATCC BAA-1303) protein is Serine--tRNA ligase.